Reading from the N-terminus, the 1020-residue chain is Sodium/potassium-transporting ATPase subunit alpha-2 (1020 aa).

Positions 1 to 5 are excised as a propeptide; sequence MGRGA. The tract at residues 1 to 31 is disordered; sequence MGRGAGREYSPAATTAENGGGKKKQKEKELD. The Cytoplasmic segment spans residues 6 to 85; that stretch reads GREYSPAATT…NALTPPPTTP (80 aa). A Phosphoserine modification is found at Ser-10. The interaction with phosphoinositide-3 kinase stretch occupies residues 80–82; it reads PPP. The helical transmembrane segment at 86 to 106 threads the bilayer; the sequence is EWVKFCRQLFGGFSILLWIGA. The Extracellular segment spans residues 107-129; sequence ILCFLAYGIQAAMEDEPSNDNLY. A helical transmembrane segment spans residues 130-150; the sequence is LGVVLAAVVIVTGCFSYYQEA. Topologically, residues 151–286 are cytoplasmic; the sequence is KSSKIMDSFK…VGRTPIAMEI (136 aa). Over residues 212–227 the composition is skewed to polar residues; sequence DNSSLTGESEPQTRSP. The segment at 212–231 is disordered; sequence DNSSLTGESEPQTRSPEFTH. Residues 287 to 306 form a helical membrane-spanning segment; sequence EHFIQLITGVAVFLGVSFFV. Residues 307–318 are Extracellular-facing; the sequence is LSLILGYSWLEA. The helical transmembrane segment at 319–336 threads the bilayer; sequence VIFLIGIIVANVPEGLLA. Residues 337–769 lie on the Cytoplasmic side of the membrane; that stretch reads TVTVCLTLTA…EEGRLIFDNL (433 aa). Asp-374 acts as the 4-aspartylphosphate intermediate in catalysis. Phosphoserine occurs at positions 439, 450, 496, and 559. The residue at position 570 (Thr-570) is a Phosphothreonine. Residues Ser-587 and Ser-672 each carry the phosphoserine modification. Asp-714 and Asp-718 together coordinate Mg(2+). The helical transmembrane segment at 770 to 789 threads the bilayer; sequence KKSIAYTLTSNIPEITPFLL. Residues 790 to 799 lie on the Extracellular side of the membrane; that stretch reads FIIANIPLPL. The helical transmembrane segment at 800–820 threads the bilayer; it reads GTVTILCIDLGTDMVPAISLA. Residues 821 to 840 lie on the Cytoplasmic side of the membrane; the sequence is YEAAESDIMKRQPRNSQTDK. Ser-826 bears the Phosphoserine mark. Residues 841-863 form a helical membrane-spanning segment; it reads LVNERLISMAYGQIGMIQALGGF. Residues 864 to 915 lie on the Extracellular side of the membrane; it reads FTYFVILAENGFLPSRLLGIRLDWDDRTMNDLEDSYGQEWTYEQRKVVEFTC. Residues 916–935 traverse the membrane as a helical segment; it reads HTAFFASIVVVQWADLIICK. The Cytoplasmic segment spans residues 936–948; it reads TRRNSVFQQGMKN. Residue Ser-940 is modified to Phosphoserine; by PKA. A helical membrane pass occupies residues 949–967; that stretch reads KILIFGLLEETALAAFLSY. Residues 968-982 are Extracellular-facing; it reads CPGMGVALRMYPLKV. Residues 983–1003 traverse the membrane as a helical segment; the sequence is TWWFCAFPYSLLIFIYDEVRK. Topologically, residues 1004–1020 are cytoplasmic; that stretch reads LILRRYPGGWVEKETYY.

Belongs to the cation transport ATPase (P-type) (TC 3.A.3) family. Type IIC subfamily. As to quaternary structure, the sodium/potassium-transporting ATPase is composed of a catalytic alpha subunit, an auxiliary non-catalytic beta subunit and an additional regulatory subunit. Interacts with regulatory subunit FXYD1.

It is found in the membrane. The protein localises to the cell membrane. The enzyme catalyses K(+)(out) + Na(+)(in) + ATP + H2O = K(+)(in) + Na(+)(out) + ADP + phosphate + H(+). Its function is as follows. This is the catalytic component of the active enzyme, which catalyzes the hydrolysis of ATP coupled with the exchange of sodium and potassium ions across the plasma membrane. This action creates the electrochemical gradient of sodium and potassium, providing the energy for active transport of various nutrients. In Homo sapiens (Human), this protein is Sodium/potassium-transporting ATPase subunit alpha-2 (ATP1A2).